The following is a 299-amino-acid chain: tRNA dimethylallyltransferase (299 aa).

13 to 20 contributes to the ATP binding site; sequence GPTASGKT. 15-20 is a substrate binding site; sequence TASGKT. The interval 38–41 is interaction with substrate tRNA; it reads DSRQ.

The protein belongs to the IPP transferase family. In terms of assembly, monomer. The cofactor is Mg(2+).

It catalyses the reaction adenosine(37) in tRNA + dimethylallyl diphosphate = N(6)-dimethylallyladenosine(37) in tRNA + diphosphate. Catalyzes the transfer of a dimethylallyl group onto the adenine at position 37 in tRNAs that read codons beginning with uridine, leading to the formation of N6-(dimethylallyl)adenosine (i(6)A). The polypeptide is tRNA dimethylallyltransferase (Prochlorococcus marinus (strain MIT 9515)).